A 746-amino-acid chain; its full sequence is 4-hydroxy-3-methylbut-2-en-1-yl diphosphate synthase (flavodoxin) (746 aa).

4 residues coordinate [4Fe-4S] cluster: Cys-653, Cys-656, Cys-687, and Glu-694.

It belongs to the IspG family. The cofactor is [4Fe-4S] cluster.

The enzyme catalyses (2E)-4-hydroxy-3-methylbut-2-enyl diphosphate + oxidized [flavodoxin] + H2O + 2 H(+) = 2-C-methyl-D-erythritol 2,4-cyclic diphosphate + reduced [flavodoxin]. The protein operates within isoprenoid biosynthesis; isopentenyl diphosphate biosynthesis via DXP pathway; isopentenyl diphosphate from 1-deoxy-D-xylulose 5-phosphate: step 5/6. Its function is as follows. Converts 2C-methyl-D-erythritol 2,4-cyclodiphosphate (ME-2,4cPP) into 1-hydroxy-2-methyl-2-(E)-butenyl 4-diphosphate. The sequence is that of 4-hydroxy-3-methylbut-2-en-1-yl diphosphate synthase (flavodoxin) from Chlorobaculum tepidum (strain ATCC 49652 / DSM 12025 / NBRC 103806 / TLS) (Chlorobium tepidum).